Here is an 89-residue protein sequence, read N- to C-terminus: Small ribosomal subunit protein bS16 (89 aa).

This sequence belongs to the bacterial ribosomal protein bS16 family.

The protein is Small ribosomal subunit protein bS16 of Geobacillus stearothermophilus (Bacillus stearothermophilus).